A 156-amino-acid polypeptide reads, in one-letter code: Small ribosomal subunit protein uS7 (156 aa).

Belongs to the universal ribosomal protein uS7 family. Part of the 30S ribosomal subunit. Contacts proteins S9 and S11.

One of the primary rRNA binding proteins, it binds directly to 16S rRNA where it nucleates assembly of the head domain of the 30S subunit. Is located at the subunit interface close to the decoding center, probably blocks exit of the E-site tRNA. The polypeptide is Small ribosomal subunit protein uS7 (Methylobacterium radiotolerans (strain ATCC 27329 / DSM 1819 / JCM 2831 / NBRC 15690 / NCIMB 10815 / 0-1)).